We begin with the raw amino-acid sequence, 195 residues long: Cyclin-dependent kinase inhibitor 7 (195 aa).

Positions 1–11 (MSETKPKRDSE) are enriched in basic and acidic residues. Disordered regions lie at residues 1–50 (MSET…SVSD), 61–80 (EEEDDHLSSSISSGCSSSET), and 117–154 (SSENLGETAEMDSATTEMRDQRKTEKKKKMEKSPTQAE). Low complexity-rich tracts occupy residues 37–50 (SSSSSSSLAYSVSD) and 68–80 (SSSISSGCSSSET). At T151 the chain carries Phosphothreonine; by KIN10.

The protein belongs to the CDI family. ICK/KRP subfamily. As to quaternary structure, specifically interacts with CDKA-1, but not with CDKB1-1. Interacts with CYCD4-1. Binds to FBL17. Ubiquitinated by SCF(FBL17). Ubiquitination leads to its subsequent degradation, thus controlling cell cycle progression. In terms of tissue distribution, expressed in flowers, in developing pollen, and at lower levels in roots and leaves.

It localises to the nucleus. It is found in the nucleoplasm. Its function is as follows. Binds and inhibits CYCD2-1/CDKA-1 complex kinase activity. May target specifically CDKA-1. The chain is Cyclin-dependent kinase inhibitor 7 (KRP7) from Arabidopsis thaliana (Mouse-ear cress).